Reading from the N-terminus, the 256-residue chain is Pimeloyl-[acyl-carrier protein] methyl ester esterase (256 aa).

In terms of domain architecture, AB hydrolase-1 spans 15 to 242; it reads HLVLLHGWGL…AAHAPFISHP (228 aa). Substrate-binding positions include tryptophan 22, 82–83, and 143–147; these read SL and FLALQ. Catalysis depends on serine 82, which acts as the Nucleophile. Catalysis depends on residues aspartate 207 and histidine 235. Histidine 235 contacts substrate.

This sequence belongs to the AB hydrolase superfamily. Carboxylesterase BioH family. As to quaternary structure, monomer.

It localises to the cytoplasm. It carries out the reaction 6-carboxyhexanoyl-[ACP] methyl ester + H2O = 6-carboxyhexanoyl-[ACP] + methanol + H(+). The protein operates within cofactor biosynthesis; biotin biosynthesis. Functionally, the physiological role of BioH is to remove the methyl group introduced by BioC when the pimeloyl moiety is complete. It allows to synthesize pimeloyl-ACP via the fatty acid synthetic pathway through the hydrolysis of the ester bonds of pimeloyl-ACP esters. This Escherichia coli (strain SMS-3-5 / SECEC) protein is Pimeloyl-[acyl-carrier protein] methyl ester esterase.